The primary structure comprises 224 residues: Lipoprotein-releasing system ATP-binding protein LolD (224 aa).

An ABC transporter domain is found at 5–224 (LRAENIKKVI…GKVVGEITRV (220 aa)). 37–44 (GASGSGKS) provides a ligand contact to ATP.

The protein belongs to the ABC transporter superfamily. Lipoprotein translocase (TC 3.A.1.125) family. As to quaternary structure, the complex is composed of two ATP-binding proteins (LolD) and two transmembrane proteins (LolC and LolE).

It localises to the cell inner membrane. In terms of biological role, part of the ABC transporter complex LolCDE involved in the translocation of mature outer membrane-directed lipoproteins, from the inner membrane to the periplasmic chaperone, LolA. Responsible for the formation of the LolA-lipoprotein complex in an ATP-dependent manner. The sequence is that of Lipoprotein-releasing system ATP-binding protein LolD from Aquifex aeolicus (strain VF5).